Consider the following 371-residue polypeptide: 4-hydroxy-3-methylbut-2-en-1-yl diphosphate synthase (flavodoxin) (371 aa).

4 residues coordinate [4Fe-4S] cluster: Cys-270, Cys-273, Cys-305, and Glu-312.

It belongs to the IspG family. The cofactor is [4Fe-4S] cluster.

It catalyses the reaction (2E)-4-hydroxy-3-methylbut-2-enyl diphosphate + oxidized [flavodoxin] + H2O + 2 H(+) = 2-C-methyl-D-erythritol 2,4-cyclic diphosphate + reduced [flavodoxin]. Its pathway is isoprenoid biosynthesis; isopentenyl diphosphate biosynthesis via DXP pathway; isopentenyl diphosphate from 1-deoxy-D-xylulose 5-phosphate: step 5/6. Functionally, converts 2C-methyl-D-erythritol 2,4-cyclodiphosphate (ME-2,4cPP) into 1-hydroxy-2-methyl-2-(E)-butenyl 4-diphosphate. This Shewanella denitrificans (strain OS217 / ATCC BAA-1090 / DSM 15013) protein is 4-hydroxy-3-methylbut-2-en-1-yl diphosphate synthase (flavodoxin).